Here is a 214-residue protein sequence, read N- to C-terminus: Ribosomal RNA small subunit methyltransferase G (214 aa).

S-adenosyl-L-methionine contacts are provided by residues Gly81, Met86, 132–133 (VE), and Arg147.

Belongs to the methyltransferase superfamily. RNA methyltransferase RsmG family.

The protein localises to the cytoplasm. It carries out the reaction guanosine(527) in 16S rRNA + S-adenosyl-L-methionine = N(7)-methylguanosine(527) in 16S rRNA + S-adenosyl-L-homocysteine. In terms of biological role, specifically methylates the N7 position of guanine in position 527 of 16S rRNA. This is Ribosomal RNA small subunit methyltransferase G from Pseudomonas aeruginosa (strain LESB58).